A 136-amino-acid polypeptide reads, in one-letter code: Glutamate-rich protein 4 (136 aa).

The tract at residues 92–136 (EEEEEEEQEEKSCVEENKGPEEKQDEERSRSSYPAQRLPDFGMTI) is disordered. Residues 101 to 121 (EKSCVEENKGPEEKQDEERSR) are compositionally biased toward basic and acidic residues.

In Mus musculus (Mouse), this protein is Glutamate-rich protein 4 (Erich4).